The chain runs to 263 residues: Hydroxyethylthiazole kinase (263 aa).

A substrate-binding site is contributed by M41. ATP contacts are provided by R117 and S163. A substrate-binding site is contributed by G190.

The protein belongs to the Thz kinase family. Requires Mg(2+) as cofactor.

It carries out the reaction 5-(2-hydroxyethyl)-4-methylthiazole + ATP = 4-methyl-5-(2-phosphooxyethyl)-thiazole + ADP + H(+). The protein operates within cofactor biosynthesis; thiamine diphosphate biosynthesis; 4-methyl-5-(2-phosphoethyl)-thiazole from 5-(2-hydroxyethyl)-4-methylthiazole: step 1/1. Its function is as follows. Catalyzes the phosphorylation of the hydroxyl group of 4-methyl-5-beta-hydroxyethylthiazole (THZ). This is Hydroxyethylthiazole kinase from Lactiplantibacillus plantarum (strain ATCC BAA-793 / NCIMB 8826 / WCFS1) (Lactobacillus plantarum).